A 123-amino-acid chain; its full sequence is Ribosome-binding factor A (123 aa).

The protein belongs to the RbfA family. In terms of assembly, monomer. Binds 30S ribosomal subunits, but not 50S ribosomal subunits or 70S ribosomes.

Its subcellular location is the cytoplasm. One of several proteins that assist in the late maturation steps of the functional core of the 30S ribosomal subunit. Associates with free 30S ribosomal subunits (but not with 30S subunits that are part of 70S ribosomes or polysomes). Required for efficient processing of 16S rRNA. May interact with the 5'-terminal helix region of 16S rRNA. This chain is Ribosome-binding factor A, found in Legionella pneumophila (strain Lens).